The sequence spans 362 residues: MRKQWLGICIAAGMLAACTSDDGQQQTVSVPQPAVCNGPIVEISGADPRFEPLNATANQDYQRDGKSYKIVQDPSRFIQAGLAAIYDAEPGSNLTASGEAFDPTQLTAAHPTLPIPSYARITNLANGRMIVVRINDRGPYGNDRVISLSRAAADRLNTSNNTKVRIDPIIVAQDGSLSGPGMACTTVAKQTYALPAPPDLSGGAGTSSVSGPQGDILPVSNSTLKSEDPTGAPVTSSGFLGAPTTLAPGVLEGSEPTPAPQPVVTAPSTTPATSPAMVTPQAASQSASGNFMVQVGAVSDQARAQQYQQQLGQKFGVPGRVTQNGAVWRIQLGPFANKAEASTLQQRLQTEAQLQSFITTAQ.

An N-terminal signal peptide occupies residues 1–17; it reads MRKQWLGICIAAGMLAA. Cysteine 18 carries the N-palmitoyl cysteine lipid modification. Residue cysteine 18 is the site of S-diacylglycerol cysteine attachment. Residues 198–276 are disordered; the sequence is PDLSGGAGTS…PSTTPATSPA (79 aa). A compositionally biased stretch (low complexity) spans 262 to 276; it reads PVVTAPSTTPATSPA. Residues 285–361 form the SPOR domain; sequence QSASGNFMVQ…AQLQSFITTA (77 aa).

This sequence belongs to the RlpA family.

The protein localises to the cell membrane. Lytic transglycosylase with a strong preference for naked glycan strands that lack stem peptides. The polypeptide is Endolytic peptidoglycan transglycosylase RlpA (Escherichia coli O157:H7).